The sequence spans 348 residues: Holliday junction branch migration complex subunit RuvB (348 aa).

Positions 4–198 (TTDYGASNTG…FGFTAHLDFY (195 aa)) are large ATPase domain (RuvB-L). ATP-binding positions include leucine 37, arginine 38, glycine 79, lysine 82, threonine 83, threonine 84, 145–147 (EDF), arginine 188, tyrosine 198, and arginine 235. A Mg(2+)-binding site is contributed by threonine 83. Residues 199-269 (PHEELEKLIE…DVKEALALYQ (71 aa)) form a small ATPAse domain (RuvB-S) region. The interval 272 to 348 (SEGLDRLDIA…DIIFGNYAQR (77 aa)) is head domain (RuvB-H). Positions 327 and 332 each coordinate DNA.

Belongs to the RuvB family. As to quaternary structure, homohexamer. Forms an RuvA(8)-RuvB(12)-Holliday junction (HJ) complex. HJ DNA is sandwiched between 2 RuvA tetramers; dsDNA enters through RuvA and exits via RuvB. An RuvB hexamer assembles on each DNA strand where it exits the tetramer. Each RuvB hexamer is contacted by two RuvA subunits (via domain III) on 2 adjacent RuvB subunits; this complex drives branch migration. In the full resolvosome a probable DNA-RuvA(4)-RuvB(12)-RuvC(2) complex forms which resolves the HJ.

Its subcellular location is the cytoplasm. It catalyses the reaction ATP + H2O = ADP + phosphate + H(+). The RuvA-RuvB-RuvC complex processes Holliday junction (HJ) DNA during genetic recombination and DNA repair, while the RuvA-RuvB complex plays an important role in the rescue of blocked DNA replication forks via replication fork reversal (RFR). RuvA specifically binds to HJ cruciform DNA, conferring on it an open structure. The RuvB hexamer acts as an ATP-dependent pump, pulling dsDNA into and through the RuvAB complex. RuvB forms 2 homohexamers on either side of HJ DNA bound by 1 or 2 RuvA tetramers; 4 subunits per hexamer contact DNA at a time. Coordinated motions by a converter formed by DNA-disengaged RuvB subunits stimulates ATP hydrolysis and nucleotide exchange. Immobilization of the converter enables RuvB to convert the ATP-contained energy into a lever motion, pulling 2 nucleotides of DNA out of the RuvA tetramer per ATP hydrolyzed, thus driving DNA branch migration. The RuvB motors rotate together with the DNA substrate, which together with the progressing nucleotide cycle form the mechanistic basis for DNA recombination by continuous HJ branch migration. Branch migration allows RuvC to scan DNA until it finds its consensus sequence, where it cleaves and resolves cruciform DNA. This Bifidobacterium longum (strain DJO10A) protein is Holliday junction branch migration complex subunit RuvB.